We begin with the raw amino-acid sequence, 244 residues long: Ribonuclease HII (244 aa).

The RNase H type-2 domain occupies 31-222; sequence RLIAGVDEAG…VRLALQGREG (192 aa). A divalent metal cation-binding residues include aspartate 37, glutamate 38, and aspartate 130.

The protein belongs to the RNase HII family. Requires Mn(2+) as cofactor. The cofactor is Mg(2+).

It localises to the cytoplasm. The catalysed reaction is Endonucleolytic cleavage to 5'-phosphomonoester.. Functionally, endonuclease that specifically degrades the RNA of RNA-DNA hybrids. This Xanthomonas axonopodis pv. citri (strain 306) protein is Ribonuclease HII.